The following is a 962-amino-acid chain: Translation initiation factor IF-2 (962 aa).

3 disordered regions span residues 122–263, 293–327, and 341–362; these read EVGV…EPAR, TEEV…TRRK, and IAAQ…AKEP. The segment covering 156–173 has biased composition (low complexity); sequence AVEPQTVVPPVAAPAAEV. Residues 188–202 show a composition bias toward basic and acidic residues; it reads KPPEEKETKVKHAEP. Residues 244-256 are compositionally biased toward basic residues; it reads RPKKAKKRRRKKV. 2 stretches are compositionally biased toward basic and acidic residues: residues 308–327 and 344–362; these read RPEE…TRRK and QDDR…AKEP. Residues 455-624 enclose the tr-type G domain; that stretch reads RRPPVITVMG…LLQAELLELK (170 aa). The tract at residues 464 to 471 is G1; that stretch reads GHVDHGKT. Position 464–471 (464–471) interacts with GTP; that stretch reads GHVDHGKT. The interval 489–493 is G2; it reads GITQH. The segment at 510–513 is G3; that stretch reads DTPG. Residues 510–514 and 564–567 each bind GTP; these read DTPGH and NKVD. The tract at residues 564 to 567 is G4; sequence NKVD. The tract at residues 600–602 is G5; it reads SAK.

The protein belongs to the TRAFAC class translation factor GTPase superfamily. Classic translation factor GTPase family. IF-2 subfamily.

It localises to the cytoplasm. In terms of biological role, one of the essential components for the initiation of protein synthesis. Protects formylmethionyl-tRNA from spontaneous hydrolysis and promotes its binding to the 30S ribosomal subunits. Also involved in the hydrolysis of GTP during the formation of the 70S ribosomal complex. The sequence is that of Translation initiation factor IF-2 from Syntrophobacter fumaroxidans (strain DSM 10017 / MPOB).